The sequence spans 209 residues: Kynurenine formamidase (209 aa).

Position 20 (W20) interacts with substrate. Residues H50, H54, and D56 each contribute to the Zn(2+) site. The active-site Proton donor/acceptor is H60. Positions 161 and 173 each coordinate Zn(2+).

Belongs to the Cyclase 1 superfamily. KynB family. As to quaternary structure, homodimer. The cofactor is Zn(2+).

It carries out the reaction N-formyl-L-kynurenine + H2O = L-kynurenine + formate + H(+). Its pathway is amino-acid degradation; L-tryptophan degradation via kynurenine pathway; L-kynurenine from L-tryptophan: step 2/2. Functionally, catalyzes the hydrolysis of N-formyl-L-kynurenine to L-kynurenine, the second step in the kynurenine pathway of tryptophan degradation. This Bacillus cereus (strain ATCC 10987 / NRS 248) protein is Kynurenine formamidase.